A 374-amino-acid chain; its full sequence is Fasciclin-like arabinogalactan protein CTB11 (374 aa).

The first 18 residues, 1–18, serve as a signal peptide directing secretion; that stretch reads MHFPALAVAGCLLSRATA. 2 consecutive FAS1 domains span residues 19-171 and 173-302; these read QSLD…DANM and LPHN…DGAL. N-linked (GlcNAc...) asparagine glycans are attached at residues asparagine 52, asparagine 72, asparagine 120, asparagine 132, and asparagine 176. Residues 328–348 traverse the membrane as a helical segment; sequence ILASHQLTLLAVLAMALVSIL.

This sequence belongs to the fasciclin-like AGP family.

Its subcellular location is the membrane. It participates in mycotoxin biosynthesis. Fasciclin-like arabinogalactan protein; part of the gene cluster that mediates the biosynthesis of cercosporin, a light-activated, non-host-selective toxin. The perylenequinone chromophore of cercosporin absorbs light energy to attain an electronically-activated triplet state and produces active oxygen species such as the hydroxyl radical, superoxide, hydrogen peroxide or singlet oxygen upon reaction with oxygen molecules. These reactive oxygen species cause damage to various cellular components including lipids, proteins and nucleic acids. The first step of cercosporin biosynthesis is performed by the polyketide synthase CTB1 which catalyzes the formation of nor-toralactone. The starter unit acyltransferase (SAT) domain of CTB1 initiates polyketide extension by the selective utilization of acetyl-CoA, which is elongated to the heptaketide in the beta-ketoacyl synthase (KS) domain by successive condensations with six malonyl units introduced by the malonyl acyltransferase (MAT) domain. The product template (PT) domain catalyzes C4-C9 and C2-C11 aldol cyclizations and dehydrations to a trihydroxynaphthalene, which is thought to be delivered to the thioesterase (TE) domain for product release. The bifunctional enzyme CTB3 then methylates nor-toralactone to toralactone before conducting an unusual oxidative aromatic ring opening. The O-methyltransferase CTB2 further methylates the nascent OH-6 of the CBT3 product, blocking further oxidation at this site before the reductase CTB6 reduces the 2-oxopropyl ketone at position C7, giving naphthalene. The FAD-dependent monooxygenase CTB5 in concert with the multicopper oxidase CTB12 are responsible for homodimerization of naphthalene with CTB7 installing the dioxepine moiety, finally producing cercosporin. The fasciclin domain-containing protein CTB11 might act with CTB5 and CTB12 whereas the roles of CTB9 and CTB10 have still to be elucidated. This Cercospora beticola (Sugarbeet leaf spot fungus) protein is Fasciclin-like arabinogalactan protein CTB11.